Consider the following 431-residue polypeptide: V-type ATP synthase beta chain (431 aa).

This sequence belongs to the ATPase alpha/beta chains family.

In terms of biological role, produces ATP from ADP in the presence of a proton gradient across the membrane. The V-type beta chain is a regulatory subunit. The chain is V-type ATP synthase beta chain from Treponema denticola (strain ATCC 35405 / DSM 14222 / CIP 103919 / JCM 8153 / KCTC 15104).